A 496-amino-acid chain; its full sequence is MTTITKAACIGGGVIGGAWAARFALAGIDVNIFDPHPEAERIIGEVMANAERAYGMLTMAPLPPRGKFTFCRSIQEAVEGVDWIQESVPERLPLKRGVINEIDAAARPDALIGSSTSGLLPSDLQAEMKHPERMFVAHPYNPVYLLPLVELVGGRKTSPETIRRAEEAVAEIGMKGVVIAKEIEAFVGDRLLEALWREALWLIQDDICDTETLDDVMRYSFGMRWAQMGLFETYRIAGGEAGMRHFLAQFGPCLKWPWTKFTDVVDLDDALVEKIGAQSDAQAAGRSIRELERIRDENLVGIMHALKAGDGGKGWGAGKLLADFEKRLWEKGGSPSKSLDASGPLRLVDTKVNAAWVDYNGHMTEHRYLQLFGDTSDALLKVIGVDFAYVEAGHSYYTVETHIRHLGEAKLGQALYTTLQLLSSDEKRIHFFTRIHDAASGDVIATAEQMMLHVDAKAGKSVPAPAEVMAKLKPIAEGHAKLDAPDGAGRHVGQKR.

An L-carnitine dehydrogenase region spans residues 1–335 (MTTITKAACI…KRLWEKGGSP (335 aa)). Residue 11–16 (GGGVIG) participates in NAD(+) binding. A betainyl-CoA thioesterase region spans residues 336-496 (SKSLDASGPL…GAGRHVGQKR (161 aa)).

In the N-terminal section; belongs to the 3-hydroxyacyl-CoA dehydrogenase family. L-carnitine dehydrogenase subfamily. It in the C-terminal section; belongs to the betainyl-CoA thioesterase family. In terms of assembly, homodimer.

It is found in the cytoplasm. It catalyses the reaction carnitine + NAD(+) = 3-dehydrocarnitine + NADH + H(+). It carries out the reaction N,N,N-trimethylglycyl-CoA + H2O = glycine betaine + CoA + H(+). Its pathway is amine and polyamine metabolism; carnitine metabolism. Functionally, multifunctional enzyme that catalyzes the NAD(+)-dependent oxidation of L-carnitine to 3-dehydrocarnitine and the cleavage of betainyl-CoA (N,N,N-trimethylglycyl-CoA) into glycine betaine and coenzyme A. Can also hydrolyze L-carnitinyl-CoA, but with much lower efficiency. Is involved in a L-carnitine degradation pathway that allows R.meliloti to grow on L-carnitine as the sole source of carbon and nitrogen. This Rhizobium meliloti (strain 1021) (Ensifer meliloti) protein is L-carnitine dehydrogenase/betainyl-CoA thioesterase.